Here is a 305-residue protein sequence, read N- to C-terminus: Zinc transporter ZIP9 (305 aa).

A helical transmembrane segment spans residues 7 to 27 (ICLLSLAMLVACYVAGIIPLA). A glycan (N-linked (GlcNAc...) asparagine) is linked at Asn-29. 5 helical membrane passes run 35–55 (LKLV…AVIV), 104–124 (AYIG…DQIG), 144–164 (ITTT…LGAA), 174–194 (LIVF…LVSF), and 208–228 (HLLV…LGLS). An N-linked (GlcNAc...) asparagine glycan is attached at Asn-239. 2 helical membrane passes run 242-262 (GVAM…HVLP) and 284-304 (LEVA…IGHH).

Belongs to the ZIP transporter (TC 2.A.5) family.

It localises to the golgi apparatus. It is found in the trans-Golgi network membrane. The protein resides in the cell membrane. The protein localises to the cytoplasm. Its subcellular location is the perinuclear region. It localises to the mitochondrion. It is found in the nucleus. It catalyses the reaction Zn(2+)(in) = Zn(2+)(out). Transports zinc ions across cell and organelle membranes into the cytoplasm and regulates intracellular zinc homeostasis. Participates in the zinc ions efflux out of the secretory compartments. Regulates intracellular zinc level, resulting in the enhancement of AKT1 and MAPK3/MAPK1 (Erk1/2) phosphorylation in response to the BCR activation. Also functions as a membrane androgen receptor that mediates, through a G protein, the non-classical androgen signaling pathway, characterized by the activation of MAPK3/MAPK1 (Erk1/2) and transcription factors CREB1 or ATF1. Moreover, has dual functions as a membrane-bound androgen receptor and as an androgen-dependent zinc transporter both of which are mediated through an inhibitory G protein (Gi) that mediates both MAP kinase and zinc signaling leading to the androgen-dependent apoptotic process. This is Zinc transporter ZIP9 from Gallus gallus (Chicken).